Consider the following 240-residue polypeptide: Transcriptional regulatory protein rxt2 (240 aa).

It belongs to the RXT2 family. As to quaternary structure, component of the RPD3C(L) complex.

The protein localises to the nucleus. In terms of biological role, component of the RPD3C(L) histone deacetylase complex (HDAC) responsible for the deacetylation of lysine residues on the N-terminal part of the core histones (H2A, H2B, H3 and H4). Histone deacetylation gives a tag for epigenetic repression and plays an important role in transcriptional regulation, cell cycle progression and developmental events. The protein is Transcriptional regulatory protein rxt2 (rtx2) of Schizosaccharomyces pombe (strain 972 / ATCC 24843) (Fission yeast).